Reading from the N-terminus, the 410-residue chain is Peptidase T (410 aa).

Residue H78 participates in Zn(2+) binding. The active site involves D80. Position 140 (D140) interacts with Zn(2+). The active-site Proton acceptor is the E173. Zn(2+)-binding residues include E174, D196, and H379.

It belongs to the peptidase M20B family. Requires Zn(2+) as cofactor.

It is found in the cytoplasm. The enzyme catalyses Release of the N-terminal residue from a tripeptide.. In terms of biological role, cleaves the N-terminal amino acid of tripeptides. This is Peptidase T from Pectobacterium carotovorum subsp. carotovorum (strain PC1).